A 150-amino-acid polypeptide reads, in one-letter code: Avidin-related protein 2 (150 aa).

The N-terminal stretch at 1–24 (MVHATSPLLLLLLLSLALVAPSLS) is a signal peptide. The Avidin-like domain maps to 26–147 (RKCSLTGEWD…GNNDFTRQHT (122 aa)). Residues C28 and C105 are joined by a disulfide bond. 5 residues coordinate biotin: N36, S40, Y57, T59, and D63. Residues N67 and N93 are each glycosylated (N-linked (GlcNAc...) asparagine). 3 residues coordinate biotin: S95, S99, and N140.

As to quaternary structure, homotetramer. Post-translationally, glycosylated.

The protein localises to the secreted. In terms of biological role, forms a strong non-covalent specific complex with biotin. This Gallus gallus (Chicken) protein is Avidin-related protein 2 (AVR2).